The chain runs to 409 residues: tRNA-specific 2-thiouridylase MnmA (409 aa).

ATP contacts are provided by residues glycine 40 to serine 47 and leucine 66. Cysteine 127 functions as the Nucleophile in the catalytic mechanism. Cysteine 127 and cysteine 237 are disulfide-bonded. Glycine 152 is an ATP binding site. Residues arginine 156 to leucine 179 are disordered. The interaction with tRNA stretch occupies residues lysine 187–glutamine 189. Cysteine 237 serves as the catalytic Cysteine persulfide intermediate. The interaction with tRNA stretch occupies residues arginine 342–tyrosine 343.

It belongs to the MnmA/TRMU family.

It is found in the cytoplasm. The enzyme catalyses S-sulfanyl-L-cysteinyl-[protein] + uridine(34) in tRNA + AH2 + ATP = 2-thiouridine(34) in tRNA + L-cysteinyl-[protein] + A + AMP + diphosphate + H(+). Catalyzes the 2-thiolation of uridine at the wobble position (U34) of tRNA, leading to the formation of s(2)U34. The protein is tRNA-specific 2-thiouridylase MnmA of Prochlorococcus marinus (strain MIT 9303).